Reading from the N-terminus, the 145-residue chain is D-aminoacyl-tRNA deacylase (145 aa).

A Gly-cisPro motif, important for rejection of L-amino acids motif is present at residues 137–138 (GP).

This sequence belongs to the DTD family. In terms of assembly, homodimer.

It is found in the cytoplasm. It catalyses the reaction glycyl-tRNA(Ala) + H2O = tRNA(Ala) + glycine + H(+). It carries out the reaction a D-aminoacyl-tRNA + H2O = a tRNA + a D-alpha-amino acid + H(+). Functionally, an aminoacyl-tRNA editing enzyme that deacylates mischarged D-aminoacyl-tRNAs. Also deacylates mischarged glycyl-tRNA(Ala), protecting cells against glycine mischarging by AlaRS. Acts via tRNA-based rather than protein-based catalysis; rejects L-amino acids rather than detecting D-amino acids in the active site. By recycling D-aminoacyl-tRNA to D-amino acids and free tRNA molecules, this enzyme counteracts the toxicity associated with the formation of D-aminoacyl-tRNA entities in vivo and helps enforce protein L-homochirality. The sequence is that of D-aminoacyl-tRNA deacylase from Shewanella oneidensis (strain ATCC 700550 / JCM 31522 / CIP 106686 / LMG 19005 / NCIMB 14063 / MR-1).